A 262-amino-acid chain; its full sequence is Ribosomal RNA small subunit methyltransferase A (262 aa).

Residues isoleucine 18, glycine 43, glutamate 65, aspartate 91, and asparagine 110 each coordinate S-adenosyl-L-methionine.

Belongs to the class I-like SAM-binding methyltransferase superfamily. rRNA adenine N(6)-methyltransferase family. RsmA subfamily.

The protein resides in the cytoplasm. The catalysed reaction is adenosine(1518)/adenosine(1519) in 16S rRNA + 4 S-adenosyl-L-methionine = N(6)-dimethyladenosine(1518)/N(6)-dimethyladenosine(1519) in 16S rRNA + 4 S-adenosyl-L-homocysteine + 4 H(+). Specifically dimethylates two adjacent adenosines (A1518 and A1519) in the loop of a conserved hairpin near the 3'-end of 16S rRNA in the 30S particle. May play a critical role in biogenesis of 30S subunits. In Ehrlichia canis (strain Jake), this protein is Ribosomal RNA small subunit methyltransferase A.